The following is a 433-amino-acid chain: Glutamate-1-semialdehyde 2,1-aminomutase (433 aa).

K272 carries the N6-(pyridoxal phosphate)lysine modification.

The protein belongs to the class-III pyridoxal-phosphate-dependent aminotransferase family. HemL subfamily. In terms of assembly, homodimer. Pyridoxal 5'-phosphate is required as a cofactor.

The protein localises to the cytoplasm. It carries out the reaction (S)-4-amino-5-oxopentanoate = 5-aminolevulinate. It participates in porphyrin-containing compound metabolism; protoporphyrin-IX biosynthesis; 5-aminolevulinate from L-glutamyl-tRNA(Glu): step 2/2. It functions in the pathway porphyrin-containing compound metabolism; chlorophyll biosynthesis. This chain is Glutamate-1-semialdehyde 2,1-aminomutase, found in Synechococcus sp. (strain WH7803).